The primary structure comprises 228 residues: MYGPGTKFEKAMFYTRGPKEKQLLVNLASTTDKAVHARKRRIISHALSEASIRSYEVTILDKIQLFCKQLSDASTFGGPYKNMSRWFSYLTYDIMGQLTFSQSYDMLTKDDHHFIQPLIDSYQHSQLGTEPKLDQWGLAPLLLLRIMAENKKFRRYVDDQVNHRIALEKAGQGPPDIFKLLLEHKDKETGESMGFKELSDEAVVLIIAGRRFFSPCVNGSKRFTLNSQ.

C216 provides a ligand contact to heme.

This sequence belongs to the cytochrome P450 family. It depends on heme as a cofactor.

It functions in the pathway mycotoxin biosynthesis. Functionally, cytochrome P450 monooxygenase; part of the gene cluster that mediates the biosynthesis of acetylaranotin, a member of the epipolythiodioxopiperazine (ETP) class of toxins characterized by a disulfide-bridged cyclic dipeptide. The first step of acetylaranotin biosynthesis is performed by the NRPS ataP which produces diketopiperazine cyclo-L-Phe-L-Phe via the condensation of 2 phenylalanines (L-Phe). The ataC domain of ataTC then catalyzes the formation of bishydroxylation of cyclo-L-Phe-L-Phe. The glutathione S-transferase domain ataG in ataIMG further catalyzes the conjugation of two glutathiones to the bishydroxylated intermediate. Next, the dipeptidase ataJ removes the Glu residues. The following step is performed by the carbon sulfur lyase domain ataI of ataIMG which may convert the bis-cysteinyl adduct to yield an epidithiol intermediate. The ataT domain from ataTC then catalyzes the oxidation of the free dithiols, followed by a cyclization step catalyzed by the cytochrome P450 ataF. AtaF probably acts as an epoxidase to promote a dual epoxidation formation at C8 and C9 along with C8' and C9', followed by the spontaneous nucleophilic attack of the amide nitrogens N10 and N10' to yield an intermediate with the pyrrolidine partial structure. The final steps of acetylaranotin biosynthesis involve the acetylation and ring rearrangement of an epitetrathiodiketopiperazine intermediate to produce acetylaranotin. AtaH probably catalyzes the acetylation of epitetrathiodiketopiperazine to produce a diacetate and ataY is responsible for the formation of the dihydrooxepin moiety that converts the diacetate intermediate to acetylaranotin via acetylapoaranotin. Both enzymes could function independently in the absence of the other. The acetylaranotin bis-thiomethyltransferase ataS located outside of acetylaranotin gene cluster is the main thiomethyltransferase responsible for converting acetylaranotin and its related intermediates to their methylated forms. The chain is Cytochrome P450 monooxygenase ataY from Aspergillus terreus (strain NIH 2624 / FGSC A1156).